A 226-amino-acid polypeptide reads, in one-letter code: MPDDLTPDLLIRAYANGVFPMGDDDTGIVRWHAPDPRAYLPLDAFHIPHNLRRRVRRREFSVTADRAFASVIEACADRARTWITPRIIRVYTELHERGYAHSVECWQEGDLAGGLYGVGLKGAFFGESMFYRVSNASKVALVHLVRQLRAGGFTLLDTQYSTEHLERFGVTTVPRPAFEQKLIRALDVSPDWWPLADAEAADLDTPVSEFSAAAPTLRGNESPPNG.

It belongs to the L/F-transferase family.

The protein resides in the cytoplasm. It carries out the reaction N-terminal L-lysyl-[protein] + L-leucyl-tRNA(Leu) = N-terminal L-leucyl-L-lysyl-[protein] + tRNA(Leu) + H(+). The enzyme catalyses N-terminal L-arginyl-[protein] + L-leucyl-tRNA(Leu) = N-terminal L-leucyl-L-arginyl-[protein] + tRNA(Leu) + H(+). It catalyses the reaction L-phenylalanyl-tRNA(Phe) + an N-terminal L-alpha-aminoacyl-[protein] = an N-terminal L-phenylalanyl-L-alpha-aminoacyl-[protein] + tRNA(Phe). Its function is as follows. Functions in the N-end rule pathway of protein degradation where it conjugates Leu, Phe and, less efficiently, Met from aminoacyl-tRNAs to the N-termini of proteins containing an N-terminal arginine or lysine. This Salinibacter ruber (strain DSM 13855 / M31) protein is Leucyl/phenylalanyl-tRNA--protein transferase.